A 293-amino-acid polypeptide reads, in one-letter code: AKT-interacting protein homolog A (293 aa).

Over residues 1 to 11 the composition is skewed to polar residues; that stretch reads MNPFWNMSSAS. Residues 1 to 45 are disordered; that stretch reads MNPFWNMSSASVRKRSENDEKISTGDQKISPPRSSSAKKQLPPIP. The span at 14-23 shows a compositional bias: basic and acidic residues; sequence KRSENDEKIS. Over residues 24–38 the composition is skewed to polar residues; that stretch reads TGDQKISPPRSSSAK. One can recognise a UBC core domain in the interval 75–223; it reads YLEYSLLAEF…VVDSVKLCNS (149 aa). The segment covering 256–266 has biased composition (basic and acidic residues); the sequence is AQKKKSEEQSK. The disordered stretch occupies residues 256–293; sequence AQKKKSEEQSKGLHVSGLSWVKPGSVLPFSKEENSLQT.

Belongs to the ubiquitin-conjugating enzyme family. FTS subfamily.

It is found in the cytoplasm. Its subcellular location is the cell membrane. May function to promote vesicle trafficking and/or fusion. May also regulate apoptosis. The chain is AKT-interacting protein homolog A (aktip-a) from Xenopus laevis (African clawed frog).